The chain runs to 1190 residues: Isoleucine--tRNA ligase, cytoplasmic (1190 aa).

Residues 49–59 (PFATGLPHYGH) carry the 'HIGH' region motif. The tract at residues 271–299 (DKPKAKLSNGPAGDTKKANPKAKGAKPES) is disordered. Positions 632-636 (KMAKK) match the 'KMSKS' region motif. Position 635 (lysine 635) interacts with ATP.

It belongs to the class-I aminoacyl-tRNA synthetase family.

It localises to the cytoplasm. The protein localises to the cytosol. The catalysed reaction is tRNA(Ile) + L-isoleucine + ATP = L-isoleucyl-tRNA(Ile) + AMP + diphosphate. The protein is Isoleucine--tRNA ligase, cytoplasmic of Arabidopsis thaliana (Mouse-ear cress).